We begin with the raw amino-acid sequence, 181 residues long: ATP synthase subunit delta (181 aa).

This sequence belongs to the ATPase delta chain family. In terms of assembly, F-type ATPases have 2 components, F(1) - the catalytic core - and F(0) - the membrane proton channel. F(1) has five subunits: alpha(3), beta(3), gamma(1), delta(1), epsilon(1). F(0) has three main subunits: a(1), b(2) and c(10-14). The alpha and beta chains form an alternating ring which encloses part of the gamma chain. F(1) is attached to F(0) by a central stalk formed by the gamma and epsilon chains, while a peripheral stalk is formed by the delta and b chains.

The protein resides in the cell membrane. Functionally, f(1)F(0) ATP synthase produces ATP from ADP in the presence of a proton or sodium gradient. F-type ATPases consist of two structural domains, F(1) containing the extramembraneous catalytic core and F(0) containing the membrane proton channel, linked together by a central stalk and a peripheral stalk. During catalysis, ATP synthesis in the catalytic domain of F(1) is coupled via a rotary mechanism of the central stalk subunits to proton translocation. This protein is part of the stalk that links CF(0) to CF(1). It either transmits conformational changes from CF(0) to CF(1) or is implicated in proton conduction. The sequence is that of ATP synthase subunit delta from Clostridium kluyveri (strain NBRC 12016).